The primary structure comprises 93 residues: Integration host factor subunit beta (93 aa).

It belongs to the bacterial histone-like protein family. Heterodimer of an alpha and a beta chain.

This protein is one of the two subunits of integration host factor, a specific DNA-binding protein that functions in genetic recombination as well as in transcriptional and translational control. This is Integration host factor subunit beta from Actinobacillus pleuropneumoniae serotype 7 (strain AP76).